Reading from the N-terminus, the 115-residue chain is Dolichyl-diphosphooligosaccharide--protein glycosyltransferase subunit DAD1 (115 aa).

Residues 1-31 are Cytoplasmic-facing; sequence MARSTGKDAQALFHSLRSAYAATPTTLKIID. A helical transmembrane segment spans residues 32–52; it reads LYVGFAVFTALIQVVYMAIVG. The Lumenal portion of the chain corresponds to 53–55; that stretch reads SFP. The chain crosses the membrane as a helical span at residues 56–76; that stretch reads FNSFLSGVLSCVGTAVLAVCL. Residues 77–94 lie on the Cytoplasmic side of the membrane; it reads RIQVNKDNKEFKDLPPER. A helical transmembrane segment spans residues 95–115; it reads AFADFVLCNLVLHLVIMNFLG.

It belongs to the DAD/OST2 family. In terms of assembly, component of the oligosaccharyltransferase (OST) complex.

The protein localises to the endoplasmic reticulum membrane. It functions in the pathway protein modification; protein glycosylation. Subunit of the oligosaccharyl transferase (OST) complex that catalyzes the initial transfer of a defined glycan (Glc(3)Man(9)GlcNAc(2) in eukaryotes) from the lipid carrier dolichol-pyrophosphate to an asparagine residue within an Asn-X-Ser/Thr consensus motif in nascent polypeptide chains, the first step in protein N-glycosylation. N-glycosylation occurs cotranslationally and the complex associates with the Sec61 complex at the channel-forming translocon complex that mediates protein translocation across the endoplasmic reticulum (ER). All subunits are required for a maximal enzyme activity. This chain is Dolichyl-diphosphooligosaccharide--protein glycosyltransferase subunit DAD1 (DAD1), found in Citrus unshiu (Satsuma mandarin).